Reading from the N-terminus, the 347-residue chain is Dihydroorotase (347 aa).

Zn(2+)-binding residues include H17 and H19. Residues 19–21 and N45 each bind substrate; that span reads HVR. Zn(2+) is bound by residues K102, H139, and H177. Residue K102 is modified to N6-carboxylysine. A substrate-binding site is contributed by H139. Position 222 (L222) interacts with substrate. D250 contributes to the Zn(2+) binding site. D250 is an active-site residue. Positions 254 and 266 each coordinate substrate.

This sequence belongs to the metallo-dependent hydrolases superfamily. DHOase family. Class II DHOase subfamily. In terms of assembly, homodimer. Zn(2+) serves as cofactor.

It carries out the reaction (S)-dihydroorotate + H2O = N-carbamoyl-L-aspartate + H(+). The protein operates within pyrimidine metabolism; UMP biosynthesis via de novo pathway; (S)-dihydroorotate from bicarbonate: step 3/3. Catalyzes the reversible cyclization of carbamoyl aspartate to dihydroorotate. The polypeptide is Dihydroorotase (Acidovorax sp. (strain JS42)).